We begin with the raw amino-acid sequence, 225 residues long: PKHD-type hydroxylase YbiX (225 aa).

The region spanning 78-177 (TLSTPLFNRY…RVASFMWIQS (100 aa)) is the Fe2OG dioxygenase domain. Fe cation contacts are provided by His-96, Asp-98, and His-158. A 2-oxoglutarate-binding site is contributed by Arg-168.

Fe(2+) serves as cofactor. It depends on L-ascorbate as a cofactor.

The sequence is that of PKHD-type hydroxylase YbiX from Escherichia coli (strain SMS-3-5 / SECEC).